The chain runs to 1404 residues: DNA-directed RNA polymerase subunit beta' (1404 aa).

Zn(2+) is bound by residues Cys-60, Cys-62, Cys-75, and Cys-78. Residues Asp-449, Asp-451, and Asp-453 each contribute to the Mg(2+) site. Zn(2+) is bound by residues Cys-778, Cys-852, Cys-859, and Cys-862. The tract at residues 1380 to 1404 (LDRPLEEEEEEEIPQAIAEESDAEE) is disordered. Over residues 1384-1404 (LEEEEEEEIPQAIAEESDAEE) the composition is skewed to acidic residues.

Belongs to the RNA polymerase beta' chain family. As to quaternary structure, the RNAP catalytic core consists of 2 alpha, 1 beta, 1 beta' and 1 omega subunit. When a sigma factor is associated with the core the holoenzyme is formed, which can initiate transcription. Mg(2+) serves as cofactor. It depends on Zn(2+) as a cofactor.

The enzyme catalyses RNA(n) + a ribonucleoside 5'-triphosphate = RNA(n+1) + diphosphate. Functionally, DNA-dependent RNA polymerase catalyzes the transcription of DNA into RNA using the four ribonucleoside triphosphates as substrates. This is DNA-directed RNA polymerase subunit beta' from Leptospira interrogans serogroup Icterohaemorrhagiae serovar Lai (strain 56601).